The chain runs to 484 residues: Ribosome biogenesis protein YTM1 (484 aa).

The tract at residues 11-94 (VKVLFTTTEQ…EKTVTLQYVR (84 aa)) is ubiquitin-like (UBL) domain. WD repeat units follow at residues 121 to 160 (SSAGKWSGSSFLQGQDRILSASYDGLLRIWNGSGQALATS), 166 to 204 (GPLCGLKSAKFMSSTKIAAAGLDRTVRIWDYTEADDHFS), 215 to 254 (GHRSIIESLGVDGSSRRILTACADGSIGLWTTSKKLAPEA), 289 to 329 (VHSR…VVST), 331 to 372 (TTSN…AATS), 378 to 418 (GHIN…PAAG), and 448 to 484 (GEGVKVFDVQWDKTWGIVSGGEDKKVQINKGRNIISS).

Belongs to the WD repeat WDR12/YTM1 family. In terms of assembly, component of the NOP7 complex, composed of ERB1, NOP7 and YTM1. The complex is held together by ERB1, which interacts with NOP7 via its N-terminal domain and with YTM1 via a high-affinity interaction between the seven-bladed beta-propeller domains of the 2 proteins. The NOP7 complex associates with the 66S pre-ribosome. Interacts (via UBL domain) with MDN1 (via VWFA/MIDAS domain).

Its subcellular location is the nucleus. It localises to the nucleolus. It is found in the nucleoplasm. Functionally, component of the NOP7 complex, which is required for maturation of the 25S and 5.8S ribosomal RNAs and formation of the 60S ribosome. The polypeptide is Ribosome biogenesis protein YTM1 (Pyricularia oryzae (strain 70-15 / ATCC MYA-4617 / FGSC 8958) (Rice blast fungus)).